Reading from the N-terminus, the 537-residue chain is DNA-directed primase/polymerase protein (537 aa).

A coiled-coil region spans residues 1 to 22; that stretch reads MLRKWEARVKQIEERASHYERK. Substrate contacts are provided by residues Arg76, 114 to 116, 165 to 169, 270 to 273, and Lys279; these read DLE, KFSRH, and RNFR. Residues Asp114 and Glu116 each coordinate Mn(2+). Zn(2+)-binding residues include Cys401, His408, Cys428, and Cys433. The Zinc knuckle motif signature appears at 401–434; sequence CENIGRAHKSNNIMILVDLKNEVWYQKCHDPVCK. Positions 462-481 are disordered; the sequence is SGETDDTSTSLTKDSQTPPS. The interval 462 to 536 is interaction with RPA1; sequence SGETDDTSTS…DELIIEALQN (75 aa). Over residues 468-478 the composition is skewed to low complexity; it reads TSTSLTKDSQT. 2 consecutive short sequence motifs (RPA1-binding motif) follow at residues 494 to 507 and 524 to 532; these read WDDE…EATE and DIPDELIIE.

The protein belongs to the eukaryotic-type primase small subunit family. In terms of assembly, interacts with RPA1; leading to recruitment to chromatin and stimulate DNA primase activity. Interacts with SSBP1. Interacts with POLDIP2; leading to enhance DNA polymerase activity. Mn(2+) serves as cofactor.

The protein localises to the nucleus. Its subcellular location is the mitochondrion matrix. It localises to the chromosome. It catalyses the reaction ssDNA + n NTP = ssDNA/pppN(pN)n-1 hybrid + (n-1) diphosphate.. It carries out the reaction DNA(n) + a 2'-deoxyribonucleoside 5'-triphosphate = DNA(n+1) + diphosphate. In terms of biological role, DNA primase and DNA polymerase required to tolerate replication-stalling lesions by bypassing them. Required to facilitate mitochondrial and nuclear replication fork progression by initiating de novo DNA synthesis using dNTPs and acting as an error-prone DNA polymerase able to bypass certain DNA lesions. Shows a high capacity to tolerate DNA damage lesions such as 8oxoG and abasic sites in DNA. Provides different translesion synthesis alternatives when DNA replication is stalled: able to synthesize DNA primers downstream of lesions, such as ultraviolet (UV) lesions, R-loops and G-quadruplexes, to allow DNA replication to continue. Can also realign primers ahead of 'unreadable lesions' such as abasic sites and 6-4 photoproduct (6-4 pyrimidine-pyrimidinone), thereby skipping the lesion. Repriming avoids fork degradation while leading to accumulation of internal ssDNA gaps behind the forks. Also able to incorporate nucleotides opposite DNA lesions such as 8oxoG, like a regular translesion synthesis DNA polymerase. Also required for reinitiating stalled forks after UV damage during nuclear DNA replication. Required for mitochondrial DNA (mtDNA) synthesis and replication, by reinitiating synthesis after UV damage or in the presence of chain-terminating nucleotides. Prevents APOBEC family-mediated DNA mutagenesis by repriming downstream of abasic site to prohibit error-prone translesion synthesis. Has non-overlapping function with POLH. In addition to its role in DNA damage response, also required to maintain efficient nuclear and mitochondrial DNA replication in unperturbed cells. This Mus musculus (Mouse) protein is DNA-directed primase/polymerase protein.